The primary structure comprises 33 residues: MTWELIAQLTFLTSIIVSGPLVIALLAIRKGNL.

Residues 5-25 (LIAQLTFLTSIIVSGPLVIAL) form a helical membrane-spanning segment.

Belongs to the Psb30/Ycf12 family. In terms of assembly, PSII is composed of 1 copy each of membrane proteins PsbA, PsbB, PsbC, PsbD, PsbE, PsbF, PsbH, PsbI, PsbJ, PsbK, PsbL, PsbM, PsbT, PsbX, PsbY, PsbZ, Psb30/Ycf12, peripheral proteins of the oxygen-evolving complex and a large number of cofactors. It forms dimeric complexes.

Its subcellular location is the plastid. It is found in the chloroplast thylakoid membrane. Functionally, a core subunit of photosystem II (PSII), probably helps stabilize the reaction center. The polypeptide is Photosystem II reaction center protein Psb30 (Psilotum nudum (Whisk fern)).